Consider the following 549-residue polypeptide: Probable serine/threonine-protein kinase WNK5 (549 aa).

A Protein kinase domain is found at 25 to 283 (GRFREVLGKG…AKELLADPFL (259 aa)). ATP contacts are provided by residues 105–108 (TELF) and lysine 155. Aspartate 172 functions as the Proton acceptor in the catalytic mechanism. Residues 414–490 (ESFGHEDDED…SPAIDDDQNQ (77 aa)) form a disordered region. Over residues 452–463 (DDSSNDVIPDMD) the composition is skewed to acidic residues. The span at 467–476 (RSSNRLLNSS) shows a compositional bias: low complexity. Serine 504 carries the post-translational modification Phosphoserine. Residues 525–549 (RGRGFDPNTNELQPQPSSTDFIRRC) are disordered. The span at 531-549 (PNTNELQPQPSSTDFIRRC) shows a compositional bias: polar residues.

It belongs to the protein kinase superfamily. Ser/Thr protein kinase family. WNK subfamily. In terms of assembly, interacts with AHK4.

It carries out the reaction L-seryl-[protein] + ATP = O-phospho-L-seryl-[protein] + ADP + H(+). It catalyses the reaction L-threonyl-[protein] + ATP = O-phospho-L-threonyl-[protein] + ADP + H(+). Functionally, regulates flowering time by modulating the photoperiod pathway. The polypeptide is Probable serine/threonine-protein kinase WNK5 (WNK5) (Arabidopsis thaliana (Mouse-ear cress)).